The following is a 555-amino-acid chain: Small ribosomal subunit protein uS3m (555 aa).

Residues 1–20 (MARKGNPISVRLGKNRSSDS) are disordered.

The protein belongs to the universal ribosomal protein uS3 family.

It localises to the mitochondrion. The sequence is that of Small ribosomal subunit protein uS3m (RPS3) from Brassica napus (Rape).